Here is a 173-residue protein sequence, read N- to C-terminus: Ribosome maturation factor RimM (173 aa).

In terms of domain architecture, PRC barrel spans 94 to 173 (EGEFYWRDLI…TIEVDWDPGF (80 aa)).

It belongs to the RimM family. Binds ribosomal protein uS19.

The protein localises to the cytoplasm. In terms of biological role, an accessory protein needed during the final step in the assembly of 30S ribosomal subunit, possibly for assembly of the head region. Essential for efficient processing of 16S rRNA. May be needed both before and after RbfA during the maturation of 16S rRNA. It has affinity for free ribosomal 30S subunits but not for 70S ribosomes. In Aeromonas salmonicida (strain A449), this protein is Ribosome maturation factor RimM.